Consider the following 363-residue polypeptide: SWIRM domain-containing protein YOR338W (363 aa).

Disordered regions lie at residues 1–22 (MLDNMQFHSPAPEHPQLNGGIN) and 186–208 (LYEDDGNRSENYDEESAQEVPVR). A compositionally biased stretch (basic and acidic residues) spans 186 to 196 (LYEDDGNRSEN). Positions 266–363 (LKVEWKGSPM…LQDKHFEKYL (98 aa)) constitute an SWIRM domain.

This Saccharomyces cerevisiae (strain ATCC 204508 / S288c) (Baker's yeast) protein is SWIRM domain-containing protein YOR338W.